We begin with the raw amino-acid sequence, 178 residues long: Large ribosomal subunit protein uL16 (178 aa).

The protein belongs to the universal ribosomal protein uL16 family.

The sequence is that of Large ribosomal subunit protein uL16 from Pyrobaculum calidifontis (strain DSM 21063 / JCM 11548 / VA1).